The primary structure comprises 414 residues: WW domain-containing oxidoreductase (414 aa).

Positions 1 to 23 (MAALRYAGLDDTDSEDELPPGWE) are disordered. Thr-12 is modified (phosphothreonine). Ser-14 is modified (phosphoserine). The region spanning 16–49 (DELPPGWEERTTKDGWVYYANHTEEKTQWEHPKT) is the WW 1 domain. Tyr-33 carries the phosphotyrosine modification. The short motif at 50–55 (GKRKRV) is the Nuclear localization signal element. Residues 57–90 (GDLPYGWEQETDENGQVFFVDHINKRTTYLDPRL) form the WW 2 domain. The tract at residues 125–414 (KVVVVTGANS…IQERLGSQSG (290 aa)) is interaction with MAPT. 131 to 137 (GANSGIG) lines the NADP(+) pocket. The interval 209-273 (CNAATFALPW…RFTDINDSLG (65 aa)) is mediates targeting to the mitochondria. Ser-260 is a binding site for substrate. Phosphotyrosine; by TNK2 is present on Tyr-287. The Proton acceptor role is filled by Tyr-293.

This sequence belongs to the short-chain dehydrogenases/reductases (SDR) family. As to quaternary structure, interacts with TP53, p73/TP73 and MAPK8. Interacts with MAPT/TAU, RUNX2 and HYAL2. Forms a ternary complex with TP53 and MDM2. Interacts with ERBB4, LITAF and WBP1. Interacts with DVL1, DVL2 and DVL3. May interact with FAM189B and SCOTIN. Interacts with TNK2. Interacts with TMEM207. Interacts (via WW domain) with VOPP1. Phosphorylated upon genotoxic stress. Phosphorylation of Tyr-33 regulates interaction with TP53, TP73 and MAPK8. May also regulate proapoptotic activity. Phosphorylation by TNK2 is associated with polyubiquitination and degradation. In terms of processing, ubiquitinated when phosphorylated by TNK2, leading to its degradation. In terms of tissue distribution, widely expressed. Strongly expressed in testis, prostate, and ovary. Overexpressed in cancer cell lines. Isoform 5 and isoform 6 may only be expressed in tumor cell lines.

Its subcellular location is the cytoplasm. The protein localises to the nucleus. The protein resides in the mitochondrion. It is found in the golgi apparatus. It localises to the lysosome. Putative oxidoreductase. Acts as a tumor suppressor and plays a role in apoptosis. Required for normal bone development. May function synergistically with p53/TP53 to control genotoxic stress-induced cell death. Plays a role in TGFB1 signaling and TGFB1-mediated cell death. May also play a role in tumor necrosis factor (TNF)-mediated cell death. Inhibits Wnt signaling, probably by sequestering DVL2 in the cytoplasm. The protein is WW domain-containing oxidoreductase (WWOX) of Homo sapiens (Human).